A 65-amino-acid polypeptide reads, in one-letter code: Small ribosomal subunit protein bS21 (65 aa).

It belongs to the bacterial ribosomal protein bS21 family.

The protein is Small ribosomal subunit protein bS21 of Trichlorobacter lovleyi (strain ATCC BAA-1151 / DSM 17278 / SZ) (Geobacter lovleyi).